The following is a 574-amino-acid chain: Arginine--tRNA ligase (574 aa).

Residues 124-134 (ANPNGPLHIGH) carry the 'HIGH' region motif.

Belongs to the class-I aminoacyl-tRNA synthetase family.

It localises to the cytoplasm. It carries out the reaction tRNA(Arg) + L-arginine + ATP = L-arginyl-tRNA(Arg) + AMP + diphosphate. This chain is Arginine--tRNA ligase, found in Methanococcus aeolicus (strain ATCC BAA-1280 / DSM 17508 / OCM 812 / Nankai-3).